Consider the following 60-residue polypeptide: Cytotoxin 1 (60 aa).

Disulfide bonds link Cys-3/Cys-21, Cys-14/Cys-38, Cys-42/Cys-53, and Cys-54/Cys-59.

This sequence belongs to the three-finger toxin family. Short-chain subfamily. Type IA cytotoxin sub-subfamily. As to quaternary structure, monomer in solution; Homodimer and oligomer in the presence of negatively charged lipids forming a pore with a size ranging between 20 and 30 Angstroms. Expressed by the venom gland.

The protein resides in the secreted. The protein localises to the target cell membrane. In terms of biological role, shows cytolytic activity on many different cells by forming pore in lipid membranes. In vivo, increases heart rate or kills the animal by cardiac arrest. In addition, it binds to heparin with high affinity, interacts with Kv channel-interacting protein 1 (KCNIP1) in a calcium-independent manner, and binds to integrin alpha-V/beta-3 (ITGAV/ITGB3) with moderate affinity. The sequence is that of Cytotoxin 1 from Naja melanoleuca (Forest cobra).